Reading from the N-terminus, the 313-residue chain is tRNA dimethylallyltransferase (313 aa).

Residue 13 to 20 (GPTASGKT) participates in ATP binding. Residue 15–20 (TASGKT) coordinates substrate. Interaction with substrate tRNA regions lie at residues 38–41 (DSAL), 162–166 (QRLSR), 243–248 (RCVGYR), and 276–283 (KRQITWLR).

This sequence belongs to the IPP transferase family. In terms of assembly, monomer. Mg(2+) serves as cofactor.

It carries out the reaction adenosine(37) in tRNA + dimethylallyl diphosphate = N(6)-dimethylallyladenosine(37) in tRNA + diphosphate. In terms of biological role, catalyzes the transfer of a dimethylallyl group onto the adenine at position 37 in tRNAs that read codons beginning with uridine, leading to the formation of N6-(dimethylallyl)adenosine (i(6)A). This Aliivibrio salmonicida (strain LFI1238) (Vibrio salmonicida (strain LFI1238)) protein is tRNA dimethylallyltransferase.